A 600-amino-acid chain; its full sequence is NAD-dependent malic enzyme, mitochondrial (600 aa).

Residues 1-68 (MTRTPFTLSL…NMPIAAPVRT (68 aa)) constitute a mitochondrion transit peptide. Fumarate is bound at residue R93. Y138 serves as the catalytic Proton donor. R194 contributes to the (S)-malate binding site. NAD(+) is bound at residue R194. K212 acts as the Proton acceptor in catalysis. A divalent metal cation-binding residues include E283, D284, and D307. Residues G344 and A347 each contribute to the NAD(+) site. (S)-malate contacts are provided by N458 and N502.

The protein belongs to the malic enzymes family. The cofactor is Mg(2+). It depends on Mn(2+) as a cofactor.

The protein localises to the mitochondrion matrix. The protein resides in the cytoplasm. It is found in the cytosol. It localises to the nucleus. The catalysed reaction is (S)-malate + NAD(+) = pyruvate + CO2 + NADH. It carries out the reaction oxaloacetate + H(+) = pyruvate + CO2. Functionally, NAD-dependent mitochondrial malic enzyme that catalyzes the oxidative decarboxylation of malate to pyruvate. The protein is NAD-dependent malic enzyme, mitochondrial of Cryptococcus neoformans var. grubii serotype A (strain H99 / ATCC 208821 / CBS 10515 / FGSC 9487) (Filobasidiella neoformans var. grubii).